We begin with the raw amino-acid sequence, 315 residues long: tRNA dimethylallyltransferase (315 aa).

15-22 contacts ATP; sequence GPTACGKS. 17–22 contacts substrate; it reads TACGKS. 2 interaction with substrate tRNA regions span residues 40-43 and 162-166; these read DSAL and QRLIR.

Belongs to the IPP transferase family. In terms of assembly, monomer. Mg(2+) is required as a cofactor.

It carries out the reaction adenosine(37) in tRNA + dimethylallyl diphosphate = N(6)-dimethylallyladenosine(37) in tRNA + diphosphate. Its function is as follows. Catalyzes the transfer of a dimethylallyl group onto the adenine at position 37 in tRNAs that read codons beginning with uridine, leading to the formation of N6-(dimethylallyl)adenosine (i(6)A). This is tRNA dimethylallyltransferase from Buchnera aphidicola subsp. Acyrthosiphon pisum (strain APS) (Acyrthosiphon pisum symbiotic bacterium).